The sequence spans 557 residues: Formate--tetrahydrofolate ligase (557 aa).

An ATP-binding site is contributed by 65–72; sequence TPAGEGKT.

It belongs to the formate--tetrahydrofolate ligase family.

It carries out the reaction (6S)-5,6,7,8-tetrahydrofolate + formate + ATP = (6R)-10-formyltetrahydrofolate + ADP + phosphate. The protein operates within one-carbon metabolism; tetrahydrofolate interconversion. The polypeptide is Formate--tetrahydrofolate ligase (Methylobacterium radiotolerans (strain ATCC 27329 / DSM 1819 / JCM 2831 / NBRC 15690 / NCIMB 10815 / 0-1)).